Consider the following 680-residue polypeptide: MIDRYKHQQLRIGLVSPQQISAWANRILPNGEIVGEVTKPYTFHYKTNKPEKDGLFCERIFGPIKSGICACGNYRVIGDEKEDPKFCEQCGVEFVDSRIRRYQMGYIKLACPVTHVWYLKRLPSYIANLLDKPLKELEGLVYCDFSFARPITKKPTFLRLRGSFEYEIQSWKYSIPLFFTTQGFDTFRNREISTGAGAIREQLADLDLQIIIDYSFLEWKELGEEGPTGNEWEDRKIGRRKDFLVRRMELAKHFIRTNIEPEWMVLCLLPVLPPELRPIIQIDGGKLMSSDINELYRRVIYRNNTLTDLLTTSRSTPGELVMCQEKLVQEAVDTLLDNGIRGQPMRDGHNKVYKSFSDVIEGKEGRFRETLLGKRVDYSGRSVIVVGPSLSLHRCGLPREIAIELFQTFVIRGLIRQHLASNMGVAKSKIREKEPIIWEILQEVMQGHPVLLNRAPTLHRLGIQAFQPILVEGRAICLHPLVRKGFNADFDGDQMAVHVPLSLEAQAEARLLMFSHMNLLSPAIGDPISVPTQDMLMGLYVLTSGTRRGICANRYNPCNRKNYQNERIDDNNYKYTKEPFFCNSYDAIGAYRQKRINLDSPLWLRWQLDQRVIASREAPIEVHYESLGTYHEIYGHYLIVRSVKKEILCIYIRTTVGHISLYREIEEAIQGFCRACSYDT.

Zn(2+) is bound by residues Cys-69, Cys-71, Cys-87, and Cys-90. Asp-489, Asp-491, and Asp-493 together coordinate Mg(2+).

This sequence belongs to the RNA polymerase beta' chain family. RpoC1 subfamily. In terms of assembly, in plastids the minimal PEP RNA polymerase catalytic core is composed of four subunits: alpha, beta, beta', and beta''. When a (nuclear-encoded) sigma factor is associated with the core the holoenzyme is formed, which can initiate transcription. Requires Mg(2+) as cofactor. It depends on Zn(2+) as a cofactor.

It localises to the plastid. Its subcellular location is the chloroplast. It carries out the reaction RNA(n) + a ribonucleoside 5'-triphosphate = RNA(n+1) + diphosphate. DNA-dependent RNA polymerase catalyzes the transcription of DNA into RNA using the four ribonucleoside triphosphates as substrates. The protein is DNA-directed RNA polymerase subunit beta' of Carica papaya (Papaya).